Here is a 120-residue protein sequence, read N- to C-terminus: NAD(P)H-quinone oxidoreductase subunit 3, chloroplastic (120 aa).

Helical transmembrane passes span 10–30 (FWFFLIIGAIIPTLAFTTSKL), 64–84 (MFALVFVIFDVETIFLYPWAM), and 89–109 (LGVYGFIEALIFVLILVIGLV).

The protein belongs to the complex I subunit 3 family. In terms of assembly, NDH is composed of at least 16 different subunits, 5 of which are encoded in the nucleus.

The protein localises to the plastid. It localises to the chloroplast thylakoid membrane. It catalyses the reaction a plastoquinone + NADH + (n+1) H(+)(in) = a plastoquinol + NAD(+) + n H(+)(out). It carries out the reaction a plastoquinone + NADPH + (n+1) H(+)(in) = a plastoquinol + NADP(+) + n H(+)(out). Functionally, NDH shuttles electrons from NAD(P)H:plastoquinone, via FMN and iron-sulfur (Fe-S) centers, to quinones in the photosynthetic chain and possibly in a chloroplast respiratory chain. The immediate electron acceptor for the enzyme in this species is believed to be plastoquinone. Couples the redox reaction to proton translocation, and thus conserves the redox energy in a proton gradient. The sequence is that of NAD(P)H-quinone oxidoreductase subunit 3, chloroplastic from Chaetosphaeridium globosum (Charophycean green alga).